Here is a 374-residue protein sequence, read N- to C-terminus: Lipoyl synthase, mitochondrial (374 aa).

Residues 1 to 19 constitute a mitochondrion transit peptide; it reads MHSRSALLYRFLRPASRCF. [4Fe-4S] cluster is bound by residues cysteine 103, cysteine 108, cysteine 114, cysteine 134, cysteine 138, cysteine 141, and serine 350. In terms of domain architecture, Radical SAM core spans 119-339; the sequence is ETGTATATIM…RLLGMEMGFR (221 aa).

The protein belongs to the radical SAM superfamily. Lipoyl synthase family. [4Fe-4S] cluster is required as a cofactor. Expressed in leaves and flowers, but not in roots. Expressed in roots, rosette leaves, cauline leaves, stems, flowers and siliques.

Its subcellular location is the mitochondrion. The enzyme catalyses [[Fe-S] cluster scaffold protein carrying a second [4Fe-4S](2+) cluster] + N(6)-octanoyl-L-lysyl-[protein] + 2 oxidized [2Fe-2S]-[ferredoxin] + 2 S-adenosyl-L-methionine + 4 H(+) = [[Fe-S] cluster scaffold protein] + N(6)-[(R)-dihydrolipoyl]-L-lysyl-[protein] + 4 Fe(3+) + 2 hydrogen sulfide + 2 5'-deoxyadenosine + 2 L-methionine + 2 reduced [2Fe-2S]-[ferredoxin]. It functions in the pathway protein modification; protein lipoylation via endogenous pathway; protein N(6)-(lipoyl)lysine from octanoyl-[acyl-carrier-protein]: step 2/2. Functionally, catalyzes the radical-mediated insertion of two sulfur atoms into the C-6 and C-8 positions of the octanoyl moiety bound to the lipoyl domains of lipoate-dependent enzymes, thereby converting the octanoylated domains into lipoylated derivatives. Together with LIP2 is essential for mitochondrial protein lipoylation during seed development. Required for the lipoylation of mitochondrial pyruvate dehydrogenase component E2 proteins in leaves and roots. This is Lipoyl synthase, mitochondrial from Arabidopsis thaliana (Mouse-ear cress).